Here is a 715-residue protein sequence, read N- to C-terminus: Fatty acid oxidation complex subunit alpha (715 aa).

Residues 1 to 190 are enoyl-CoA hydratase; it reads MTTTSAFMLN…KAGLVDDVVP (190 aa). The segment at 306–715 is 3-hydroxyacyl-CoA dehydrogenase; the sequence is GPLNSVGILG…WTNGETDQGN (410 aa).

In the N-terminal section; belongs to the enoyl-CoA hydratase/isomerase family. The protein in the central section; belongs to the 3-hydroxyacyl-CoA dehydrogenase family. Heterotetramer of two alpha chains (FadJ) and two beta chains (FadI).

Its subcellular location is the cytoplasm. The enzyme catalyses a (3S)-3-hydroxyacyl-CoA = a (2E)-enoyl-CoA + H2O. It catalyses the reaction a 4-saturated-(3S)-3-hydroxyacyl-CoA = a (3E)-enoyl-CoA + H2O. It carries out the reaction a (3S)-3-hydroxyacyl-CoA + NAD(+) = a 3-oxoacyl-CoA + NADH + H(+). The catalysed reaction is (3S)-3-hydroxybutanoyl-CoA = (3R)-3-hydroxybutanoyl-CoA. Its pathway is lipid metabolism; fatty acid beta-oxidation. In terms of biological role, catalyzes the formation of a hydroxyacyl-CoA by addition of water on enoyl-CoA. Also exhibits 3-hydroxyacyl-CoA epimerase and 3-hydroxyacyl-CoA dehydrogenase activities. This is Fatty acid oxidation complex subunit alpha from Salmonella dublin (strain CT_02021853).